A 335-amino-acid polypeptide reads, in one-letter code: Nonaprenyl diphosphate synthase (335 aa).

Positions 57, 60, and 90 each coordinate isopentenyl diphosphate. Mg(2+)-binding residues include Asp97 and Asp101. A DDXXD motif motif is present at residues 97-101 (DDVMD). Isopentenyl diphosphate is bound at residue Arg107. The short motif at 223–227 (DDIID) is the DDXXD motif element.

It belongs to the FPP/GGPP synthase family. Mg(2+) is required as a cofactor.

The catalysed reaction is isopentenyl diphosphate + (2E)-geranyl diphosphate = (2E,6E)-farnesyl diphosphate + diphosphate. It catalyses the reaction isopentenyl diphosphate + (2E,6E)-farnesyl diphosphate = (2E,6E,10E)-geranylgeranyl diphosphate + diphosphate. It carries out the reaction 5 isopentenyl diphosphate + (2E,6E,10E)-geranylgeranyl diphosphate = all-trans-nonaprenyl diphosphate + 5 diphosphate. It functions in the pathway isoprenoid biosynthesis; farnesyl diphosphate biosynthesis; farnesyl diphosphate from geranyl diphosphate and isopentenyl diphosphate. It participates in isoprenoid biosynthesis; geranylgeranyl diphosphate biosynthesis; geranylgeranyl diphosphate from farnesyl diphosphate and isopentenyl diphosphate: step 1/1. Catalyzes the sequential condensations of isopentenyl pyrophosphate (IPP) with geranyl diphosphate (GPP) to yield (2E,6E)-farnesyl diphosphate (E,E-FPP), with E,E-FPP to yield geranylgeranyl diphosphate (GGPP) and with GGPP to yield nonaprenyl diphosphate. May also have weak activity with dimethylallyl diphosphate (DMAPP). The polypeptide is Nonaprenyl diphosphate synthase (Mycobacterium tuberculosis (strain ATCC 25618 / H37Rv)).